Consider the following 344-residue polypeptide: Lipase chaperone (344 aa).

The helical transmembrane segment at 14 to 34 (VAVYGAVGLAAIAGVAIWSGA) threads the bilayer. Residues 45 to 57 (LSADAAARDGASA) are compositionally biased toward low complexity. Positions 45 to 78 (LSADAAARDGASAAPPPPARPASAGMPSPLAGSS) are disordered.

This sequence belongs to the lipase chaperone family.

It is found in the cell inner membrane. Its function is as follows. May be involved in the folding of the extracellular lipase during its passage through the periplasm. This is Lipase chaperone from Burkholderia ambifaria (strain ATCC BAA-244 / DSM 16087 / CCUG 44356 / LMG 19182 / AMMD) (Burkholderia cepacia (strain AMMD)).